The primary structure comprises 177 residues: Ribonuclease alpha-sarcin (177 aa).

A signal peptide spans 1–27; that stretch reads MVAIKNLVLVALTAVTALAVPSPLEAR. 2 disulfides stabilise this stretch: Cys33–Cys175 and Cys103–Cys159. Residue His77 is part of the active site. Residues 86-119 form a disordered region; sequence DGKLPKGRTPIKFGKSDCDRPPKHSKDGNGKTDH. Positions 99 to 119 are enriched in basic and acidic residues; the sequence is GKSDCDRPPKHSKDGNGKTDH. Glu123 serves as the catalytic Proton acceptor. The Proton donor role is filled by His164.

The protein belongs to the ribonuclease U2 family.

It localises to the secreted. It catalyses the reaction a 28S rRNA containing guanosine-adenosine pair + H2O = an [RNA fragment]-3'-adenosine-3'-phosphate + a 5'-a hydroxy-guanosine-3'-[RNA fragment].. Functionally, alpha-sarcin is specific for purines in both single- and double-stranded RNA. Its toxic action on eukaryotic cells is the result of cleavage of a single phosphodiester bond in the 60S subunit of ribosomes. Inhibits both the EFl (elongation factor 1)-dependent binding of aminoacyl-tRNA and the GTP-dependent binding of EF2 (elongation factor 2) to ribosomes. This chain is Ribonuclease alpha-sarcin (sar), found in Aspergillus giganteus.